Reading from the N-terminus, the 331-residue chain is Glycerophosphodiester phosphodiesterase 1 (331 aa).

At 1 to 3 (MWL) the chain is on the cytoplasmic side. Residues 4 to 24 (WEDQGGLLGPFSFLLLVLLLV) traverse the membrane as a helical segment. The Lumenal portion of the chain corresponds to 25–247 (TRSPVNACLL…KPRYDTFWKH (223 aa)). The GP-PDE domain occupies 65–331 (ISAIAHRGGS…SMVEDCEPHF (267 aa)). Mg(2+) contacts are provided by Glu97 and Asp99. Asn168 is a glycosylation site (N-linked (GlcNAc...) asparagine). Asp174 contributes to the Mg(2+) binding site. Asn198 is a glycosylation site (N-linked (GlcNAc...) asparagine). A helical transmembrane segment spans residues 248–268 (FIFVMMDILLDWSMHNILWYL). Over 269–331 (CGISAFLMQK…SMVEDCEPHF (63 aa)) the chain is Cytoplasmic.

The protein belongs to the glycerophosphoryl diester phosphodiesterase family. As to quaternary structure, interacts with PRAF2. Interacts with RGS16. Mg(2+) serves as cofactor. N-glycosylated. Widely expressed.

Its subcellular location is the cell membrane. The protein resides in the cytoplasmic vesicle membrane. The enzyme catalyses sn-glycero-3-phospho-1D-myo-inositol + H2O = myo-inositol + sn-glycerol 3-phosphate + H(+). It catalyses the reaction 1-O-(1Z-octadecenyl)-sn-glycero-3-phospho-(N-5Z,8Z,11Z,14Z-eicosatetraenoyl)-ethanolamine + H2O = 1-O-(1Z-octadecenyl)-sn-glycero-3-phosphate + N-(5Z,8Z,11Z,14Z-eicosatetraenoyl)-ethanolamine + H(+). It carries out the reaction 1-O-(1Z-octadecenyl)-sn-glycero-3-phospho-(N-9Z-octadecenoyl)-ethanolamine + H2O = 1-O-(1Z-octadecenyl)-sn-glycero-3-phosphate + N-(9Z-octadecenoyl) ethanolamine + H(+). The catalysed reaction is 1-O-(1Z-octadecenyl)-sn-glycero-3-phospho-N-hexadecanoyl-ethanolamine + H2O = 1-O-(1Z-octadecenyl)-sn-glycero-3-phosphate + N-hexadecanoylethanolamine + H(+). The enzyme catalyses N-(4Z,7Z,10Z,13Z,16Z,19Z)-docosahexaenoyl-sn-glycero-3-phosphoethanolamine + H2O = N-(4Z,7Z,10Z,13Z,16Z,19Z)-docosahexaenoyl ethanolamine + sn-glycerol 3-phosphate + H(+). It catalyses the reaction N-eicosanoyl-sn-glycero-3-phosphoethanolamine + H2O = N-eicosanoyl ethanolamine + sn-glycerol 3-phosphate + H(+). It carries out the reaction N-hexadecanoyl-sn-glycero-3-phosphoethanolamine + H2O = N-hexadecanoylethanolamine + sn-glycerol 3-phosphate + H(+). The catalysed reaction is N-(9Z-octadecenoyl)-sn-glycero-3-phosphoethanolamine + H2O = N-(9Z-octadecenoyl) ethanolamine + sn-glycerol 3-phosphate + H(+). The enzyme catalyses N-(5Z,8Z,11Z,14Z-eicosatetraenoyl)-sn-glycero-3-phosphoethanolamine + H2O = N-(5Z,8Z,11Z,14Z-eicosatetraenoyl)-ethanolamine + sn-glycerol 3-phosphate + H(+). Inhibited by EDTA, calcium chloride, and zinc chloride. Enhanced by magnesium chloride. Glycerophosphodiester phosphodiesterase activity can be modulated by G-protein signaling pathways. Its function is as follows. Hydrolyzes the phosphodiester bond of glycerophosphodiesters such as glycerophosphoinositol (GroPIns) and glycerophosphoethanolamine (GroPEth), to yield a glycerol phosphate and an alcohol. Hydrolyzes glycerophospho-N-acylethanolamines to N-acylethanolamines in the brain and participates in bioactive N-acylethanolamine biosynthesis such as anandamide (an endocannabinoid), N-palmitoylethanolamine (an anti-inflammatory), and N-oleoylethanolamine (an anorexic). In addition, has a lysophospholipase D activity by hydrolyzing N-acyl-lysoplasmenylethanolamine (N-acyl-lysoPlsEt) to N-acylethanolamine. However lysophospholipase D activity is lower than glycerophosphodiester phosphodiesterase activity. Has little or no activity towards glycerophosphocholine. The polypeptide is Glycerophosphodiester phosphodiesterase 1 (Homo sapiens (Human)).